Here is a 254-residue protein sequence, read N- to C-terminus: Adenosylcobinamide-GDP ribazoletransferase (254 aa).

The next 6 helical transmembrane spans lie at Tyr-36–Leu-56, Pro-61–Leu-81, Ala-114–Leu-134, Leu-138–Val-158, Trp-197–Phe-217, and Leu-232–Leu-252.

This sequence belongs to the CobS family. Requires Mg(2+) as cofactor.

It localises to the cell membrane. It carries out the reaction alpha-ribazole + adenosylcob(III)inamide-GDP = adenosylcob(III)alamin + GMP + H(+). It catalyses the reaction alpha-ribazole 5'-phosphate + adenosylcob(III)inamide-GDP = adenosylcob(III)alamin 5'-phosphate + GMP + H(+). It participates in cofactor biosynthesis; adenosylcobalamin biosynthesis; adenosylcobalamin from cob(II)yrinate a,c-diamide: step 7/7. Functionally, joins adenosylcobinamide-GDP and alpha-ribazole to generate adenosylcobalamin (Ado-cobalamin). Also synthesizes adenosylcobalamin 5'-phosphate from adenosylcobinamide-GDP and alpha-ribazole 5'-phosphate. The protein is Adenosylcobinamide-GDP ribazoletransferase of Desulfitobacterium hafniense (strain Y51).